We begin with the raw amino-acid sequence, 1303 residues long: Latent-transforming growth factor beta-binding protein 3 (1303 aa).

The first 43 residues, 1–43 (MPGPRGAAGGLAPEMRGAGAAGLLALLLLLLLLLLGLGGRVEG), serve as a signal peptide directing secretion. Asn-89 carries N-linked (GlcNAc...) asparagine glycosylation. The EGF-like 1 domain maps to 109 to 141 (RVVVCPLPCMNGGQCSSRNQCLCPPDFTGRFCQ). 6 disulfides stabilise this stretch: Cys-113-Cys-123, Cys-117-Cys-129, Cys-131-Cys-140, Cys-279-Cys-303, Cys-289-Cys-316, and Cys-304-Cys-319. The tract at residues 247–282 (SSNAESAAPSQHLLPHPKPSHPRPPTQKPLGRCFQD) is disordered. Residues 277–331 (GRCFQDTLPKQPCGSNPLPGLTKQEDCCGSIGTAWGQSKCHKCPQLQYTGVQKPG) form the TB 1 domain. Asn-349 carries an N-linked (GlcNAc...) asparagine glycan. An EGF-like 2; calcium-binding domain is found at 355 to 395 (DINECAMPGVCRHGDCLNNPGSYRCVCPPGHSLGPSRTQCI). Cystine bridges form between Cys-359/Cys-370, Cys-365/Cys-379, Cys-381/Cys-394, Cys-405/Cys-428, Cys-415/Cys-440, Cys-429/Cys-443, and Cys-430/Cys-455. Positions 403-455 (SLCFRLVSPEHQCQHPLTTRLTRQLCCCSVGKAWGARCQRCPTDGTAAFKEIC) constitute a TB 2 domain. A disordered region spans residues 478–552 (FSLFLHPDGP…ISRPSPPTMR (75 aa)). Residues 529–540 (PTATTTPARPYP) show a composition bias toward low complexity. An EGF-like 3 domain is found at 574-615 (ETDECRLNQNICGHGECVPGPPDYSCHCNPGYRSHPQHRYCV). 37 disulfide bridges follow: Cys-578-Cys-590, Cys-585-Cys-599, Cys-601-Cys-614, Cys-620-Cys-632, Cys-625-Cys-641, Cys-664-Cys-676, Cys-670-Cys-685, Cys-687-Cys-701, Cys-748-Cys-759, Cys-754-Cys-768, Cys-770-Cys-783, Cys-789-Cys-800, Cys-795-Cys-809, Cys-811-Cys-824, Cys-830-Cys-841, Cys-836-Cys-850, Cys-852-Cys-864, Cys-870-Cys-883, Cys-877-Cys-892, Cys-894-Cys-907, Cys-919-Cys-942, Cys-929-Cys-954, Cys-943-Cys-959, Cys-944-Cys-971, Cys-997-Cys-1010, Cys-1005-Cys-1019, Cys-1021-Cys-1034, Cys-1040-Cys-1051, Cys-1046-Cys-1060, Cys-1062-Cys-1075, Cys-1086-Cys-1097, Cys-1092-Cys-1106, Cys-1108-Cys-1121, Cys-1138-Cys-1162, Cys-1148-Cys-1174, Cys-1163-Cys-1177, and Cys-1164-Cys-1186. The 44-residue stretch at 616–659 (DVNECEAEPCGPGRGICMNTGGSYNCHCNRGYRLHVGAGGRSCV) folds into the EGF-like 4; calcium-binding domain. The 43-residue stretch at 660 to 702 (DLNECAKPHLCGDGGFCINFPGHYKCNCYPGYRLKASRPPVCE) folds into the EGF-like 5; calcium-binding domain. Positions 744–784 (DVNECAEGSPCSPGWCENLPGSFRCTCAQGYAPAPDGRSCL) constitute an EGF-like 6; calcium-binding domain. One can recognise an EGF-like 7; calcium-binding domain in the interval 785–825 (DVDECEAGDVCDNGICSNTPGSFQCQCLSGYHLSRDRSHCE). Residues 826–865 (DIDECDFPAACIGGDCINTNGSYRCLCPQGHRLVGGRKCQ) form the EGF-like 8; calcium-binding domain. Residue Asn-845 is glycosylated (N-linked (GlcNAc...) asparagine). The EGF-like 9; calcium-binding domain occupies 866 to 908 (DIDECSQDPSLCLPHGACKNLQGSYVCVCDEGFTPTQDQHGCE). The TB 3 domain maps to 917–971 (KECYLNFDDTVFCDSVLATNVTQQECCCSLGAGWGDHCEIYPCPVYSSAEFHSLC). N-linked (GlcNAc...) asparagine glycosylation occurs at Asn-936. The EGF-like 10; calcium-binding domain maps to 993–1035 (DIDECMLFGSEICKEGKCVNTQPGYECYCKQGFYYDGNLLECV). One can recognise an EGF-like 11; calcium-binding domain in the interval 1036–1076 (DVDECLDESNCRNGVCENTRGGYRCACTPPAEYSPAQRQCL). The EGF-like 12; calcium-binding domain occupies 1082–1122 (DVDECQDPAACRPGRCVNLPGSYRCECRPPWVPGPSGRDCQ). Positions 1136-1186 (DVCWSQRGEDGMCAGPLAGPALTFDDCCCRQGRGWGAQCRPCPPRGAGSHC) constitute a TB 4 domain. The span at 1188-1198 (TSQSESNSFWD) shows a compositional bias: polar residues. The interval 1188 to 1219 (TSQSESNSFWDTSPLLLGKPPRDEDSSEEDSD) is disordered. One can recognise an EGF-like 13; calcium-binding domain in the interval 1254–1298 (DIDECRELNQRGLLCKSERCVNTSGSFRCVCKAGFARSRPHGACV). 2 disulfide bridges follow: Cys-1258-Cys-1273 and Cys-1268-Cys-1282. The N-linked (GlcNAc...) asparagine glycan is linked to Asn-1275.

It belongs to the LTBP family. In terms of assembly, forms part of the large latent transforming growth factor beta precursor complex; removal is essential for activation of complex. Interacts with EFEMP2. Contains hydroxylated asparagine residues. Post-translationally, two intrachain disulfide bonds from the TB3 domain are rearranged upon TGFB1 binding, and form interchain bonds with TGFB1 propeptide, anchoring it to the extracellular matrix. Isoform 2: Expressed prominently in heart, skeletal muscle, prostate, testis, small intestine and ovary. Isoform 1: Strongly expressed in pancreas and liver.

Its subcellular location is the secreted. The protein resides in the extracellular space. The protein localises to the extracellular matrix. Its function is as follows. Key regulator of transforming growth factor beta (TGFB1, TGFB2 and TGFB3) that controls TGF-beta activation by maintaining it in a latent state during storage in extracellular space. Associates specifically via disulfide bonds with the Latency-associated peptide (LAP), which is the regulatory chain of TGF-beta, and regulates integrin-dependent activation of TGF-beta. This chain is Latent-transforming growth factor beta-binding protein 3 (LTBP3), found in Homo sapiens (Human).